The chain runs to 391 residues: Elongation factor Tu 1 (391 aa).

The region spanning 10 to 201 is the tr-type G domain; the sequence is KPHVNIGTIG…EVDNYIPTPE (192 aa). The G1 stretch occupies residues 19 to 26; the sequence is GHVDHGKT. GTP is bound at residue 19-26; that stretch reads GHVDHGKT. Mg(2+) is bound at residue Thr-26. The interval 55 to 59 is G2; it reads GITIS. The segment at 76–79 is G3; the sequence is DCPG. Residues 76 to 80 and 131 to 134 contribute to the GTP site; these read DCPGH and NKVD. The segment at 131–134 is G4; sequence NKVD. The interval 169 to 171 is G5; it reads SAL.

Belongs to the TRAFAC class translation factor GTPase superfamily. Classic translation factor GTPase family. EF-Tu/EF-1A subfamily. Monomer.

The protein localises to the cytoplasm. It catalyses the reaction GTP + H2O = GDP + phosphate + H(+). GTP hydrolase that promotes the GTP-dependent binding of aminoacyl-tRNA to the A-site of ribosomes during protein biosynthesis. This Bartonella quintana (strain Toulouse) (Rochalimaea quintana) protein is Elongation factor Tu 1.